The sequence spans 372 residues: Virion morphogenesis protein OPG132 (372 aa).

The protein belongs to the orthopoxvirus OPG132 family.

The protein resides in the host cytoplasm. It is found in the virion. Functionally, lipid-bound viral membrane assembly protein that plays an essential role in immature virion (IV) to mature virion (MV) transition. Functions in both crescent-shaped viral membranes formation and its enclosure to form immature virions. In addition, participates in targeting mature virion proteins to sites of virion assembly to ensure their correct localization. The sequence is that of Virion morphogenesis protein OPG132 (OPG132) from Homo sapiens (Human).